Here is a 730-residue protein sequence, read N- to C-terminus: Catalase-peroxidase (730 aa).

Positions Met1 to Thr21 are disordered. The tryptophyl-tyrosyl-methioninium (Trp-Tyr) (with M-244) cross-link spans Trp95–Tyr218. The Proton acceptor role is filled by His96. Residues Tyr218–Met244 constitute a cross-link (tryptophyl-tyrosyl-methioninium (Tyr-Met) (with W-95)). His259 provides a ligand contact to heme b.

The protein belongs to the peroxidase family. Peroxidase/catalase subfamily. As to quaternary structure, homodimer or homotetramer. It depends on heme b as a cofactor. Formation of the three residue Trp-Tyr-Met cross-link is important for the catalase, but not the peroxidase activity of the enzyme.

It catalyses the reaction H2O2 + AH2 = A + 2 H2O. The catalysed reaction is 2 H2O2 = O2 + 2 H2O. Its function is as follows. Bifunctional enzyme with both catalase and broad-spectrum peroxidase activity. The polypeptide is Catalase-peroxidase (Clostridium botulinum (strain Alaska E43 / Type E3)).